The sequence spans 333 residues: Cap-specific mRNA (nucleoside-2'-O-)-methyltransferase (333 aa).

Tyrosine 22 serves as a coordination point for mRNA. Residues glutamine 39, tyrosine 66, glycine 68, glycine 72, aspartate 95, arginine 97, valine 116, and aspartate 138 each coordinate S-adenosyl-L-methionine. The tract at residues 169–249 is binding to NPH-I; sequence PVASSLKWRC…NKIVRNKVVV (81 aa). The binding to Rap94 stretch occupies residues 169–333; sequence PVASSLKWRC…NSKRSVRSNK (165 aa). Lysine 175 (for methyltransferase activity) is an active-site residue. MRNA-binding positions include 177 to 180, aspartate 182, 205 to 207, and glutamate 233; these read RCPF and SAE. Residues 305-333 are disordered; it reads SHEPIQRKISSKNSMSKNRNSKRSVRSNK. Residues 311-322 are compositionally biased toward low complexity; that stretch reads RKISSKNSMSKN. The span at 323 to 333 shows a compositional bias: basic residues; the sequence is RNSKRSVRSNK.

This sequence belongs to the class I-like SAM-binding methyltransferase superfamily. Poxvirus/kinetoplastid 2'-O-MTase family. As to quaternary structure, interacts with poly(A) polymerase catalytic subunit OPG063. Interacts with OPG109 and OPG123; these interactions might help linking transcription to capping and polyadenylation.

Its subcellular location is the virion. The enzyme catalyses a 5'-end (N(7)-methyl 5'-triphosphoguanosine)-ribonucleoside in mRNA + S-adenosyl-L-methionine = a 5'-end (N(7)-methyl 5'-triphosphoguanosine)-(2'-O-methyl-ribonucleoside) in mRNA + S-adenosyl-L-homocysteine + H(+). Displays methyltransferase, positive regulation of the poly(A) polymerase and transcription elongation activities. Involved in the modification of both mRNA ends and in intermediate and late gene positive transcription elongation. At the mRNAs 5' end, methylates the ribose 2' OH group of the first transcribed nucleotide, thereby producing a 2'-O-methylpurine cap. At the 3' end, functions as a processivity factor which stimulates the activity of the viral poly(A) polymerase OPG063 that creates mRNA's poly(A) tail. In the presence of OPG102, OPG063 does not dissociate from the RNA allowing tail elongation to around 250 adenylates. The polypeptide is Cap-specific mRNA (nucleoside-2'-O-)-methyltransferase (OPG102) (Vaccinia virus (strain Western Reserve) (VACV)).